The following is a 151-amino-acid chain: Methylglyoxal synthase (151 aa).

An MGS-like domain is found at 6 to 151 (RTMPAHKHVA…DYEAYLAERM (146 aa)). Substrate is bound by residues His19, Lys23, 45–48 (TGTT), and 65–66 (SG). The active-site Proton donor/acceptor is Asp71. His98 lines the substrate pocket.

This sequence belongs to the methylglyoxal synthase family.

The catalysed reaction is dihydroxyacetone phosphate = methylglyoxal + phosphate. Functionally, catalyzes the formation of methylglyoxal from dihydroxyacetone phosphate. This Vibrio parahaemolyticus serotype O3:K6 (strain RIMD 2210633) protein is Methylglyoxal synthase.